A 200-amino-acid polypeptide reads, in one-letter code: Superoxide dismutase [Mn] 2 (200 aa).

Mn(2+) contacts are provided by His-28, His-76, Asp-158, and His-162.

Belongs to the iron/manganese superoxide dismutase family. The cofactor is Mn(2+).

It carries out the reaction 2 superoxide + 2 H(+) = H2O2 + O2. In terms of biological role, destroys superoxide anion radicals which are normally produced within the cells and which are toxic to biological systems. This chain is Superoxide dismutase [Mn] 2 (sod2), found in Halobacterium salinarum (strain ATCC 700922 / JCM 11081 / NRC-1) (Halobacterium halobium).